The chain runs to 61 residues: Large ribosomal subunit protein uL29 (61 aa).

This sequence belongs to the universal ribosomal protein uL29 family.

This Nitratidesulfovibrio vulgaris (strain ATCC 29579 / DSM 644 / CCUG 34227 / NCIMB 8303 / VKM B-1760 / Hildenborough) (Desulfovibrio vulgaris) protein is Large ribosomal subunit protein uL29.